Consider the following 804-residue polypeptide: Leucine--tRNA ligase (804 aa).

The short motif at 40–51 (PYPSGAGLHVGH) is the 'HIGH' region element. The 'KMSKS' region signature appears at 574–578 (KMSKS). Lys-577 contributes to the ATP binding site.

It belongs to the class-I aminoacyl-tRNA synthetase family.

It localises to the cytoplasm. The enzyme catalyses tRNA(Leu) + L-leucine + ATP = L-leucyl-tRNA(Leu) + AMP + diphosphate. The protein is Leucine--tRNA ligase of Shouchella clausii (strain KSM-K16) (Alkalihalobacillus clausii).